The following is a 230-amino-acid chain: Uracil-DNA glycosylase (230 aa).

Aspartate 70 acts as the Proton acceptor in catalysis.

Belongs to the uracil-DNA glycosylase (UDG) superfamily. UNG family.

Its subcellular location is the cytoplasm. The catalysed reaction is Hydrolyzes single-stranded DNA or mismatched double-stranded DNA and polynucleotides, releasing free uracil.. Its function is as follows. Excises uracil residues from the DNA which can arise as a result of misincorporation of dUMP residues by DNA polymerase or due to deamination of cytosine. The sequence is that of Uracil-DNA glycosylase from Pseudomonas syringae pv. syringae (strain B728a).